The sequence spans 351 residues: Uroporphyrinogen decarboxylase (351 aa).

Substrate contacts are provided by residues 25-29, Asp74, Tyr151, Ser206, and His325; that span reads RQAGR.

The protein belongs to the uroporphyrinogen decarboxylase family. In terms of assembly, homodimer.

Its subcellular location is the cytoplasm. It carries out the reaction uroporphyrinogen III + 4 H(+) = coproporphyrinogen III + 4 CO2. The protein operates within porphyrin-containing compound metabolism; protoporphyrin-IX biosynthesis; coproporphyrinogen-III from 5-aminolevulinate: step 4/4. Functionally, catalyzes the decarboxylation of four acetate groups of uroporphyrinogen-III to yield coproporphyrinogen-III. The chain is Uroporphyrinogen decarboxylase from Chlorobium phaeobacteroides (strain BS1).